The chain runs to 282 residues: Farnesyl diphosphate synthase (282 aa).

Residues lysine 45, arginine 48, and histidine 77 each coordinate isopentenyl diphosphate. Residues aspartate 84 and aspartate 90 each contribute to the Mg(2+) site. Arginine 95 contacts (2E)-geranyl diphosphate. An isopentenyl diphosphate-binding site is contributed by arginine 96. (2E)-geranyl diphosphate contacts are provided by lysine 181, threonine 182, and glutamine 220.

This sequence belongs to the FPP/GGPP synthase family. Mg(2+) is required as a cofactor.

It localises to the cytoplasm. The catalysed reaction is isopentenyl diphosphate + (2E)-geranyl diphosphate = (2E,6E)-farnesyl diphosphate + diphosphate. In Buchnera aphidicola subsp. Acyrthosiphon pisum (strain APS) (Acyrthosiphon pisum symbiotic bacterium), this protein is Farnesyl diphosphate synthase (ispA).